Here is a 139-residue protein sequence, read N- to C-terminus: Large ribosomal subunit protein uL16 (139 aa).

The protein belongs to the universal ribosomal protein uL16 family. As to quaternary structure, part of the 50S ribosomal subunit.

Its function is as follows. Binds 23S rRNA and is also seen to make contacts with the A and possibly P site tRNAs. This is Large ribosomal subunit protein uL16 from Crocosphaera subtropica (strain ATCC 51142 / BH68) (Cyanothece sp. (strain ATCC 51142)).